The following is a 342-amino-acid chain: tRNA N6-adenosine threonylcarbamoyltransferase (342 aa).

Fe cation-binding residues include His111 and His115. Substrate-binding positions include 134–138 (LVSGG), Asp167, Gly180, and Asn276. Asp304 serves as a coordination point for Fe cation.

Belongs to the KAE1 / TsaD family. It depends on Fe(2+) as a cofactor.

It localises to the cytoplasm. The catalysed reaction is L-threonylcarbamoyladenylate + adenosine(37) in tRNA = N(6)-L-threonylcarbamoyladenosine(37) in tRNA + AMP + H(+). Functionally, required for the formation of a threonylcarbamoyl group on adenosine at position 37 (t(6)A37) in tRNAs that read codons beginning with adenine. Is involved in the transfer of the threonylcarbamoyl moiety of threonylcarbamoyl-AMP (TC-AMP) to the N6 group of A37, together with TsaE and TsaB. TsaD likely plays a direct catalytic role in this reaction. This is tRNA N6-adenosine threonylcarbamoyltransferase from Helicobacter acinonychis (strain Sheeba).